The chain runs to 860 residues: Ubiquitin carboxyl-terminal hydrolase 13 (860 aa).

The UBP-type; degenerate zinc finger occupies 168 to 276 (QVSRHARSLR…EHLLHFGIDM (109 aa)). Zn(2+) contacts are provided by C192, C195, C212, and H225. In terms of domain architecture, USP spans 318-857 (TGIKNLGNSC…LGYMYFYRRL (540 aa)). Residue C327 is the Nucleophile of the active site. Residues 611–636 (DLTPPIVIPEDTRDSSTNNSLESPEI) form a disordered region. UBA domains lie at 635-676 (EIDE…IIAH) and 710-750 (QPPE…IFTH). The span at 755 to 768 (DESEAMSDTADTEP) shows a compositional bias: acidic residues. A disordered region spans residues 755 to 795 (DESEAMSDTADTEPNDNSFSNANAHTDSSLSPDQDLSSPRV). Over residues 769 to 780 (NDNSFSNANAHT) the composition is skewed to polar residues. The segment covering 781–793 (DSSLSPDQDLSSP) has biased composition (low complexity). Residue H819 is the Proton acceptor of the active site.

It belongs to the peptidase C19 family.

It carries out the reaction Thiol-dependent hydrolysis of ester, thioester, amide, peptide and isopeptide bonds formed by the C-terminal Gly of ubiquitin (a 76-residue protein attached to proteins as an intracellular targeting signal).. Specifically inhibited by spautin-1 (specific and potent autophagy inhibitor-1), a derivative of MBCQ that binds to usp13 and inhibits deubiquitinase activity. Its function is as follows. Deubiquitinase that mediates deubiquitination of target proteins and is involved in various processes such as autophagy and endoplasmic reticulum-associated degradation (ERAD). The protein is Ubiquitin carboxyl-terminal hydrolase 13 (usp13) of Danio rerio (Zebrafish).